Reading from the N-terminus, the 186-residue chain is NADH-quinone oxidoreductase subunit B (186 aa).

The [4Fe-4S] cluster site is built by Cys44, Cys45, Cys110, and Cys139.

This sequence belongs to the complex I 20 kDa subunit family. NDH-1 is composed of 14 different subunits. Subunits NuoB, C, D, E, F, and G constitute the peripheral sector of the complex. The cofactor is [4Fe-4S] cluster.

It is found in the cell inner membrane. The catalysed reaction is a quinone + NADH + 5 H(+)(in) = a quinol + NAD(+) + 4 H(+)(out). NDH-1 shuttles electrons from NADH, via FMN and iron-sulfur (Fe-S) centers, to quinones in the respiratory chain. The immediate electron acceptor for the enzyme in this species is believed to be ubiquinone. Couples the redox reaction to proton translocation (for every two electrons transferred, four hydrogen ions are translocated across the cytoplasmic membrane), and thus conserves the redox energy in a proton gradient. The chain is NADH-quinone oxidoreductase subunit B from Leptospira biflexa serovar Patoc (strain Patoc 1 / Ames).